A 547-amino-acid chain; its full sequence is NADH-ubiquinone oxidoreductase chain 5 (547 aa).

A run of 15 helical transmembrane segments spans residues 3–23 (ISIFLMVFLLFCVSLFLIFFV), 45–65 (YFNSIMFSLILLLVTISVLVF), 80–100 (YFMLLVFVGSMFSLIFSSGCF), 101–121 (SMLVSWDLLGISSFFLVLFYN), 132–152 (TVLTNRLGDFFLFVFFSSTIF), 198–218 (ISSLVHSSTLVTAGLVLIMNF), 227–247 (VIMIIMVVGVFTMFFSSMAAL), 264–284 (MGFSMLTVGIGLSFVSFIHLL), 319–339 (VPYFIQLQLLVTLFCLCGLVF), 352–372 (FFFSNFFMVVFACMFFFSVFL), 399–419 (VVMNFLSLLLVLFSIFFIWWM), 430–450 (FLYVDFFVPLFFVVMIMVVGF), 460–477 (FVYKFLVDFFAKGWVYGL), 485–505 (LFLGGINSLGVTFFSFTGFWS), and 512–532 (LYFNSVVIVLVLFFFLVWGCI).

Belongs to the complex I subunit 5 family.

The protein resides in the mitochondrion inner membrane. It carries out the reaction a ubiquinone + NADH + 5 H(+)(in) = a ubiquinol + NAD(+) + 4 H(+)(out). Its function is as follows. Core subunit of the mitochondrial membrane respiratory chain NADH dehydrogenase (Complex I) that is believed to belong to the minimal assembly required for catalysis. Complex I functions in the transfer of electrons from NADH to the respiratory chain. The immediate electron acceptor for the enzyme is believed to be ubiquinone. The protein is NADH-ubiquinone oxidoreductase chain 5 (ND5) of Ascaris suum (Pig roundworm).